The sequence spans 1052 residues: Membrane-bound transcription factor site-1 protease (1052 aa).

Residues 1 to 17 (MKLVNIWLLLLVVLLCG) form the signal peptide. The propeptide occupies 18 to 186 (KKHLGDRLGK…TGRHSSRRLL (169 aa)). Residue Asn-148 is glycosylated (N-linked (GlcNAc...) asparagine). Ser-168 carries the phosphoserine modification. Residues 187-999 (RAIPRQVAQT…MPGRYNQEVG (813 aa)) lie on the Lumenal side of the membrane. A Peptidase S8 domain is found at 190–472 (PRQVAQTLQA…HGKLDLLRAY (283 aa)). Residue Asp-218 is the Charge relay system of the active site. Asn-236 carries an N-linked (GlcNAc...) asparagine glycan. The active-site Charge relay system is the His-249. Asn-305 carries N-linked (GlcNAc...) asparagine glycosylation. The active-site Charge relay system is Ser-414. Residues Asn-515 and Asn-728 are each glycosylated (N-linked (GlcNAc...) asparagine). A compositionally biased stretch (polar residues) spans 877–887 (PSLSHSGNRQR). The tract at residues 877-900 (PSLSHSGNRQRPPSGAGLAPPERM) is disordered. Asn-939 carries N-linked (GlcNAc...) asparagine glycosylation. The helical transmembrane segment at 1000-1022 (QTIPVFAFLGAMVALAFFVVQIS) threads the bilayer. Residues 1023 to 1052 (KAKSRPKRRRPRAKRPQLAQQAHPARTPSV) are Cytoplasmic-facing. Basic residues predominate over residues 1026–1037 (SRPKRRRPRAKR). A disordered region spans residues 1026-1052 (SRPKRRRPRAKRPQLAQQAHPARTPSV).

This sequence belongs to the peptidase S8 family. In terms of assembly, interacts with LYSET; this interaction bridges GNPTAB to MBTPS1. Ca(2+) serves as cofactor. In terms of processing, the 148 kDa zymogen is processed progressively into two membrane-bound 120 and 106 kDa forms in the endoplasmic reticulum, and late into a secreted 98 kDa form. The propeptide is autocatalytically removed through an intramolecular cleavage after Leu-186. Further cleavage generates 14, 10, and 8 kDa intermediates. Widely expressed. In adult rat, highly expressed in anterior pituitary, thyroid and adrenal glands and in liver. In 2-day old rat, detected in developing skin, striated muscles, cardiac muscles, bones, teeth and internal organs. Highly expressed in retina, cerebellum, pituitary, submaxillary, thyroid and adrenal glands, molars, thymus, kidney and intestine.

Its subcellular location is the endoplasmic reticulum membrane. It is found in the golgi apparatus membrane. The enzyme catalyses Processes precursors containing basic and hydrophobic/aliphatic residues at P4 and P2, respectively, with a relatively relaxed acceptance of amino acids at P1 and P3.. With respect to regulation, inhibited by divalent copper and zinc ions, but not by nickel or cobalt. Inhibited by its prosegment, but not smaller fragments. Inhibited by 4-(2-aminoethyl)benzenesulfonyl fluoride (AEBSF), a serine protease inhibitor. Functionally, serine protease that cleaves after hydrophobic or small residues, provided that Arg or Lys is in position P4: known substrates include SREBF1/SREBP1, SREBF2/SREBP2, BDNF, GNPTAB, ATF6, ATF6B and FAM20C. Cleaves substrates after Arg-Ser-Val-Leu (SREBP2), Arg-His-Leu-Leu (ATF6), Arg-Gly-Leu-Thr (BDNF) and its own propeptide after Arg-Arg-Leu-Leu. Catalyzes the first step in the proteolytic activation of the sterol regulatory element-binding proteins (SREBPs) SREBF1/SREBP1 and SREBF2/SREBP2. Also mediates the first step in the proteolytic activation of the cyclic AMP-dependent transcription factor ATF-6 (ATF6 and ATF6B). Mediates the protein cleavage of GNPTAB into subunit alpha and beta, thereby participating in biogenesis of lysosomes. Cleaves the propeptide from FAM20C which is required for FAM20C secretion from the Golgi apparatus membrane and for enhancement of FAM20C kinase activity, promoting osteoblast differentiation and biomineralization. Involved in the regulation of M6P-dependent Golgi-to-lysosome trafficking of lysosomal enzymes. It is required for the activation of CREB3L2/BBF2H7, a transcriptional activator of MIA3/TANGO and other genes controlling mega vesicle formation. Therefore, it plays a key role in the regulation of mega vesicle-mediated collagen trafficking. In astrocytes and osteoblasts, upon DNA damage and ER stress, mediates the first step of the regulated intramembrane proteolytic activation of the transcription factor CREB3L1, leading to the inhibition of cell-cycle progression. The protein is Membrane-bound transcription factor site-1 protease (Mbtps1) of Rattus norvegicus (Rat).